A 311-amino-acid polypeptide reads, in one-letter code: Telomere-binding protein I1 homolog (311 aa).

Belongs to the chordopoxvirinae I1 family.

It localises to the virion. Functionally, late DNA-binding protein which binds to the hairpin form of the viral telomeric sequence. Required for the production of mature virions (MV). The sequence is that of Telomere-binding protein I1 homolog from Fowlpox virus (strain NVSL) (FPV).